A 540-amino-acid chain; its full sequence is Cytochrome P450 monooxygenase ORF5 (540 aa).

The chain crosses the membrane as a helical span at residues 48–68; it reads YHALGTAIALFACACAYALVA. N-linked (GlcNAc...) asparagine glycans are attached at residues Asn-376 and Asn-460. Cys-483 lines the heme pocket.

It belongs to the cytochrome P450 family. The cofactor is heme.

The protein localises to the membrane. It participates in sesquiterpene biosynthesis. Functionally, cytochrome P450 monooxygenase; part of the gene cluster that mediates the biosynthesis of PR-toxin, a bicyclic sesquiterpene belonging to the eremophilane class and acting as a mycotoxin. The first step of the pathway is catalyzed by the aristolochene synthase which performs the cyclization of trans,trans-farnesyl diphosphate (FPP) to the bicyclic sesquiterpene aristolochene. Following the formation of aristolochene, the non-oxygenated aristolochene is converted to the trioxygenated intermediate eremofortin B, via 7-epi-neopetasone. This conversion appears to involve three enzymes, a hydroxysterol oxidase-like enzyme, the quinone-oxidase prx3 that forms the quinone-type-structure in the bicyclic nucleus of aristolochene with the C8-oxo group and the C-3 hydroxyl group, and the P450 monooxygenase ORF6 that introduces the epoxide at the double bond between carbons 1 and 2. No monoxy or dioxy-intermediates have been reported to be released to the broth, so these three early oxidative reactions may be coupled together. Eremofortin B is further oxidized by another P450 monooxygenase, that introduces a second epoxide between carbons 7 and 11 prior to acetylation to eremofortin A by the acetyltransferase ORF8. The second epoxidation may be performed by a second P450 monooxygenase. After the acetylation step, eremofortin A is converted to eremofortin C and then to PR-toxin. First the conversion of eremofortin A to eremofortin C proceeds by oxidation of the side chain of the molecule at C-12 and is catalyzed by the short-chain oxidoreductase prx1. The cytochrome P450 monooxygenase ORF6 is probably also involved in this step. The primary alcohol formed at C-12 is finally oxidized by the short-chain alcohol dehydrogenase prx4 that forms PR-toxin. The polypeptide is Cytochrome P450 monooxygenase ORF5 (Penicillium roqueforti (strain FM164)).